Here is a 205-residue protein sequence, read N- to C-terminus: uncharacterized protein (205 aa).

The interval 1–42 (MSRKRDKPYTNRHTPARISKRRRPWAPSSSEHDEIIDKPITK) is disordered. The segment covering 14 to 24 (TPARISKRRRP) has biased composition (basic residues). Residues 30-40 (SEHDEIIDKPI) are compositionally biased toward basic and acidic residues. Residues 47–122 (PALVVMGLPA…KKLEVVWATD (76 aa)) form the RRM domain. The tract at residues 170–191 (PRSDNTKGISGDGGISSPATTS) is disordered.

This is an uncharacterized protein from Arabidopsis thaliana (Mouse-ear cress).